Reading from the N-terminus, the 242-residue chain is TGACG-sequence-specific DNA-binding protein TGA-1B (242 aa).

The segment at 1 to 125 is disordered; sequence EFCDFSGNQA…HSSPNFENNS (125 aa). The segment covering 18–45 has biased composition (polar residues); sequence DTSSPELRQSSSGSDVLNATSSTSSHQV. The span at 66-79 shows a compositional bias: basic and acidic residues; the sequence is EGSRESANDNKGLG. The span at 88-125 shows a compositional bias: polar residues; sequence SPESQGSGNYGSNVSEGLNYPSDSNKSVHSSPNFENNS. One can recognise a bZIP domain in the interval 183-242; it reads DEKKRARLVRNRESAQLSRQRKKHYVEELEDKVRIMHSTIQDLNAKVAYIIAENATLKTQ. Residues 185–216 are basic motif; that stretch reads KKRARLVRNRESAQLSRQRKKHYVEELEDKVR. Positions 225–239 are leucine-zipper; the sequence is LNAKVAYIIAENATL.

This sequence belongs to the bZIP family.

The protein localises to the nucleus. In terms of biological role, binds specifically to the DNA sequence 5'-TGACG-3'. The polypeptide is TGACG-sequence-specific DNA-binding protein TGA-1B (TGA1B) (Nicotiana tabacum (Common tobacco)).